The chain runs to 207 residues: Ras-related protein Rab7 (207 aa).

Residues 15–22, 63–67, and 125–128 each bind GTP; these read GDSGVGKT, DTAGQ, and NKID. 2 S-geranylgeranyl cysteine lipidation sites follow: Cys-205 and Cys-207. Cys-207 is subject to Cysteine methyl ester.

This sequence belongs to the small GTPase superfamily. Rab family.

Its subcellular location is the cell membrane. In terms of biological role, protein transport. Probably involved in vesicular traffic. The sequence is that of Ras-related protein Rab7 from Prunus armeniaca (Apricot).